A 188-amino-acid chain; its full sequence is Ribonuclease HII (188 aa).

The region spanning 6–188 (KPLCGIDEAG…VKGLDEPTLF (183 aa)) is the RNase H type-2 domain. Positions 12, 13, and 99 each coordinate a divalent metal cation.

Belongs to the RNase HII family. It depends on Mn(2+) as a cofactor. Mg(2+) serves as cofactor.

It localises to the cytoplasm. It carries out the reaction Endonucleolytic cleavage to 5'-phosphomonoester.. In terms of biological role, endonuclease that specifically degrades the RNA of RNA-DNA hybrids. This chain is Ribonuclease HII, found in Sulfurovum sp. (strain NBC37-1).